The following is a 199-amino-acid chain: Protein-methionine-sulfoxide reductase heme-binding subunit MsrQ (199 aa).

Transmembrane regions (helical) follow at residues 10 to 30 (WLKV…ILSV), 79 to 99 (LLGL…SVLE), 118 to 138 (LTLG…STLW), 147 to 167 (WQKL…HYLW), and 169 to 189 (VKTL…LLAL).

The protein belongs to the MsrQ family. In terms of assembly, heterodimer of a catalytic subunit (MsrP) and a heme-binding subunit (MsrQ). It depends on FMN as a cofactor. Requires heme b as cofactor.

The protein resides in the cell inner membrane. Part of the MsrPQ system that repairs oxidized periplasmic proteins containing methionine sulfoxide residues (Met-O), using respiratory chain electrons. Thus protects these proteins from oxidative-stress damage caused by reactive species of oxygen and chlorine generated by the host defense mechanisms. MsrPQ is essential for the maintenance of envelope integrity under bleach stress, rescuing a wide series of structurally unrelated periplasmic proteins from methionine oxidation. MsrQ provides electrons for reduction to the reductase catalytic subunit MsrP, using the quinone pool of the respiratory chain. This is Protein-methionine-sulfoxide reductase heme-binding subunit MsrQ from Yersinia enterocolitica serotype O:8 / biotype 1B (strain NCTC 13174 / 8081).